We begin with the raw amino-acid sequence, 249 residues long: Ribosomal RNA small subunit methyltransferase G (249 aa).

S-adenosyl-L-methionine contacts are provided by residues Gly-88, Phe-93, 111 to 113 (DAT), 139 to 140 (AE), and Arg-158. Cysteines 164 and 249 form a disulfide. An RNA binding region spans residues 245–246 (RH).

Belongs to the methyltransferase superfamily. RNA methyltransferase RsmG family.

Its subcellular location is the cytoplasm. It carries out the reaction guanosine(527) in 16S rRNA + S-adenosyl-L-methionine = N(7)-methylguanosine(527) in 16S rRNA + S-adenosyl-L-homocysteine. Specifically methylates the N7 position of guanine in position 527 of 16S rRNA. Shows a marked preference for deproteinized 16S rRNA as substrate and is completely inactive with native 30S subunits as substrate. The sequence is that of Ribosomal RNA small subunit methyltransferase G from Thermus thermophilus (strain ATCC 27634 / DSM 579 / HB8).